The sequence spans 389 residues: Probable dual-specificity RNA methyltransferase RlmN (389 aa).

Glu-114 acts as the Proton acceptor in catalysis. A Radical SAM core domain is found at 120–358 (QHYGLSVCVT…CVVRQEHGTD (239 aa)). Cys-127 and Cys-363 form a disulfide bridge. Cys-134, Cys-138, and Cys-141 together coordinate [4Fe-4S] cluster. Residues 186–187 (GE), Ser-218, 241–243 (SLH), and Asn-319 each bind S-adenosyl-L-methionine. Cys-363 acts as the S-methylcysteine intermediate in catalysis. Residues 370–389 (TMKRDRQKAVAEASGKSEGK) form a disordered region. Over residues 371–389 (MKRDRQKAVAEASGKSEGK) the composition is skewed to basic and acidic residues.

This sequence belongs to the radical SAM superfamily. RlmN family. It depends on [4Fe-4S] cluster as a cofactor.

It localises to the cytoplasm. The catalysed reaction is adenosine(2503) in 23S rRNA + 2 reduced [2Fe-2S]-[ferredoxin] + 2 S-adenosyl-L-methionine = 2-methyladenosine(2503) in 23S rRNA + 5'-deoxyadenosine + L-methionine + 2 oxidized [2Fe-2S]-[ferredoxin] + S-adenosyl-L-homocysteine. The enzyme catalyses adenosine(37) in tRNA + 2 reduced [2Fe-2S]-[ferredoxin] + 2 S-adenosyl-L-methionine = 2-methyladenosine(37) in tRNA + 5'-deoxyadenosine + L-methionine + 2 oxidized [2Fe-2S]-[ferredoxin] + S-adenosyl-L-homocysteine. Specifically methylates position 2 of adenine 2503 in 23S rRNA and position 2 of adenine 37 in tRNAs. In Streptococcus thermophilus (strain CNRZ 1066), this protein is Probable dual-specificity RNA methyltransferase RlmN.